The following is a 192-amino-acid chain: Thiosulfate reductase electron transfer subunit PhsB (192 aa).

3 4Fe-4S ferredoxin-type domains span residues Tyr8–Gly36, Thr55–Asn86, and Gly87–Gln116. Residues Cys17, Cys20, Cys23, Cys27, Cys64, Cys67, Cys72, Cys76, Cys96, Cys99, Cys102, Cys106, Cys123, Cys126, Cys139, and Cys143 each coordinate [4Fe-4S] cluster.

Composed of three subunits: PhsA, PhsB and PhsC. [4Fe-4S] cluster serves as cofactor.

The protein resides in the cell inner membrane. Its function is as follows. Component of the PhsABC thiosulfate reductase that catalyzes the reduction of thiosulfate to sulfite and hydrogen sulfide, with menaquinol as the sole electron donor. Proton motive force (PMF) is required to drive transmembrane electron transfer within the reductase. The PhsB subunit transfers electrons between PhsC and PhsA. This Salmonella typhi protein is Thiosulfate reductase electron transfer subunit PhsB (phsB).